A 548-amino-acid polypeptide reads, in one-letter code: Protein NRT1/ PTR FAMILY 2.4 (548 aa).

Helical transmembrane passes span 29–49 (TLLG…VFLI), 65–85 (IVNG…DSFF), 88–108 (IPVI…LTLI), 136–156 (ILYA…FILA), 172–192 (FFNW…TAIV), 200–220 (WKLG…IFVA), 316–336 (LVPL…QMSM), 354–374 (VSAG…IILN), 393–413 (LQKV…SAVV), 429–449 (VLWL…HFPA), 468–488 (SLTS…IDVI), and 508–528 (YLVL…CSWF).

Belongs to the major facilitator superfamily. Proton-dependent oligopeptide transporter (POT/PTR) (TC 2.A.17) family. As to expression, strongly expressed in the root stele.

It is found in the membrane. In terms of biological role, transporter involved in a passive nitrate efflux. The chain is Protein NRT1/ PTR FAMILY 2.4 (NPF2.4) from Arabidopsis thaliana (Mouse-ear cress).